Consider the following 213-residue polypeptide: Imidazole glycerol phosphate synthase subunit HisH 1 (213 aa).

A Glutamine amidotransferase type-1 domain is found at Ser3 to Ile213. Cys81 (nucleophile) is an active-site residue. Residues His195 and Glu197 contribute to the active site.

As to quaternary structure, heterodimer of HisH and HisF.

Its subcellular location is the cytoplasm. The enzyme catalyses 5-[(5-phospho-1-deoxy-D-ribulos-1-ylimino)methylamino]-1-(5-phospho-beta-D-ribosyl)imidazole-4-carboxamide + L-glutamine = D-erythro-1-(imidazol-4-yl)glycerol 3-phosphate + 5-amino-1-(5-phospho-beta-D-ribosyl)imidazole-4-carboxamide + L-glutamate + H(+). It carries out the reaction L-glutamine + H2O = L-glutamate + NH4(+). It participates in amino-acid biosynthesis; L-histidine biosynthesis; L-histidine from 5-phospho-alpha-D-ribose 1-diphosphate: step 5/9. Its function is as follows. IGPS catalyzes the conversion of PRFAR and glutamine to IGP, AICAR and glutamate. The HisH subunit provides the glutamine amidotransferase activity that produces the ammonia necessary to HisF for the synthesis of IGP and AICAR. In Legionella pneumophila (strain Paris), this protein is Imidazole glycerol phosphate synthase subunit HisH 1.